The chain runs to 493 residues: Sorting nexin-4 (493 aa).

The segment at 1–77 (MAVIDQDNFS…ILDCTVSDPH (77 aa)) is disordered. Residues 7–28 (DNFSNISWHSEQNAESAASTAQ) show a composition bias toward polar residues. Positions 56-65 (MEHDELDHSG) are enriched in basic and acidic residues. The PX domain maps to 68 to 190 (ILDCTVSDPH…AFLESPDWNA (123 aa)). A 1,2-diacyl-sn-glycero-3-phospho-(1D-myo-inositol-3-phosphate) is bound by residues Arg-111, Thr-113, Lys-137, and Arg-156. Coiled-coil stretches lie at residues 248-292 (EIKE…QKLI), 338-363 (SGTL…EYLN), and 405-442 (EQAR…QVSR).

This sequence belongs to the sorting nexin family.

It is found in the cytoplasm. The protein localises to the membrane. The protein resides in the endosome membrane. Its function is as follows. Sorting nexin, involved in the separation or division of vacuoles throughout the entire life cycle of the cells. Involved in retrieval of late-Golgi SNAREs from post-Golgi endosomes to the trans-Golgi network, for cytoplasm to vacuole transport (Cvt), and autophagy of large cargos including mitophagy, pexophagy and glycophagy. The protein is Sorting nexin-4 (vsp-5) of Neurospora crassa (strain ATCC 24698 / 74-OR23-1A / CBS 708.71 / DSM 1257 / FGSC 987).